Consider the following 144-residue polypeptide: Giant hemoglobins B chain (144 aa).

Residues 3-144 (VCGPLQRLKV…LNVITNGIQG (142 aa)) form the Globin domain. H96 provides a ligand contact to heme b.

Belongs to the globin family. As to quaternary structure, part of giant hemoglobin C1, V1 and V2. This worm has three different extracellular Hbs: two dissolved in the vascular blood, V1 (CA. 3,500 kDa) and V2 (CA. 400 kDa), and one in the coelomic fluid, C1 (CA. 400 kDa). V1 consists of four heme-containing, globin chains (B-E) and four linker chains (L1-L4). V2 consists of six globin chains (A-F) and C1 consists of five globin chains (A-E).

The protein resides in the secreted. It is found in the extracellular space. This is Giant hemoglobins B chain from Riftia pachyptila (Vent tube worm).